The sequence spans 436 residues: Enolase (436 aa).

Q167 is a binding site for (2R)-2-phosphoglycerate. E209 serves as the catalytic Proton donor. Mg(2+) contacts are provided by D246, E291, and D318. 4 residues coordinate (2R)-2-phosphoglycerate: K343, R372, S373, and K394. The active-site Proton acceptor is K343.

It belongs to the enolase family. Component of the RNA degradosome, a multiprotein complex involved in RNA processing and mRNA degradation. It depends on Mg(2+) as a cofactor.

It is found in the cytoplasm. Its subcellular location is the secreted. The protein resides in the cell surface. It carries out the reaction (2R)-2-phosphoglycerate = phosphoenolpyruvate + H2O. Its pathway is carbohydrate degradation; glycolysis; pyruvate from D-glyceraldehyde 3-phosphate: step 4/5. Functionally, catalyzes the reversible conversion of 2-phosphoglycerate (2-PG) into phosphoenolpyruvate (PEP). It is essential for the degradation of carbohydrates via glycolysis. This is Enolase from Actinobacillus pleuropneumoniae serotype 3 (strain JL03).